Reading from the N-terminus, the 153-residue chain is Acetylacetone-cleaving enzyme (153 aa).

As to quaternary structure, homotetramer. Fe cation is required as a cofactor.

The catalysed reaction is acetylacetone + O2 = methylglyoxal + acetate + H(+). It functions in the pathway xenobiotic degradation; acetylacetone degradation. In terms of biological role, cleaves acetylacetone to equimolar amounts of methylglyoxal and acetate, consuming one equivalent of molecular oxygen. The protein is Acetylacetone-cleaving enzyme (dke1) of Acinetobacter johnsonii.